The sequence spans 348 residues: Ion-translocating oxidoreductase complex subunit D (348 aa).

5 helical membrane-spanning segments follow: residues 15 to 35, 36 to 56, 67 to 87, 88 to 108, and 125 to 145; these read LTAK…GMQA, YFFG…AVAI, LTAF…LAIS, IPPY…LLLA, and VAYA…LVPI. Thr186 is subject to FMN phosphoryl threonine. 5 helical membrane passes run 212 to 232, 241 to 261, 265 to 285, 298 to 318, and 320 to 340; these read LFAN…LLLI, IPAA…LLLP, LNVV…FIAT, LIFG…GNYP, and AVAF…HYTQ.

Belongs to the NqrB/RnfD family. As to quaternary structure, the complex is composed of six subunits: RnfA, RnfB, RnfC, RnfD, RnfE and RnfG. Requires FMN as cofactor.

Its subcellular location is the cell inner membrane. In terms of biological role, part of a membrane-bound complex that couples electron transfer with translocation of ions across the membrane. This chain is Ion-translocating oxidoreductase complex subunit D, found in Actinobacillus pleuropneumoniae serotype 3 (strain JL03).